Consider the following 662-residue polypeptide: Carboxysome assembly protein CsoS2 (662 aa).

The interval 1 to 227 (MSTSNAQSGR…KRRNAKEAPQ (227 aa)) is N-terminal domain. Disordered regions lie at residues 1–258 (MSTS…SESG), 277–322 (NCDV…TCSA), and 342–419 (PAKS…RGSC). The N-repeat 1 repeat unit spans residues 8-27 (SGRAAAIARRNAQVKGKGYT). 2 stretches are compositionally biased toward low complexity: residues 28-57 (ASAAPAAPRKPAAPVAEPVVAAAPAPSQPS) and 64-76 (SVAPTATPAASAA). One copy of the N-repeat 2 repeat lies at 58 to 72 (RSRRKVSVAPTATPA). Positions 120 to 135 (RQAKAEKPTKRSERRT) are enriched in basic and acidic residues. Positions 141-150 (VASQQPSGRL) are enriched in polar residues. Residues 147–168 (SGRLQSKAYRKAQAKGKAGQEA) form an N-repeat 3 repeat. 3 stretches are compositionally biased toward low complexity: residues 161–170 (KGKAGQEAFK), 237–247 (GQSVSGTQVGQ), and 289–300 (VTQTQTTRGQVV). 5 M-repeat repeats span residues 228–278 (KVGE…SKNC), 288–338 (KVTQ…KMYC), 388–436 (KVMP…AKAC), 446–491 (KVTA…TEQF), and 496–550 (VDEQ…AMVC). Residues 228 to 559 (KVGESQTLHG…CDSTNAAAPG (332 aa)) are middle region. Over residues 391-404 (PSQTAKGNTTTGSQ) the composition is skewed to polar residues. Positions 560-631 (ESDFPAMIGQ…SPMGASQYRP (72 aa)) are C-terminal domain. One copy of the C-repeat 1 repeat lies at 564–572 (PAMIGQAQP). Disordered regions lie at residues 588–607 (KITGDGWDRGSKVTGTDGPW) and 619–662 (AGQS…GARA). The C-terminal peptide stretch occupies residues 632–662 (VNNEVPMSPITGSSGNTDTGAKVTLSGGARA). The span at 641–650 (ITGSSGNTDT) shows a compositional bias: polar residues.

It belongs to the CsoS2 family. Interacts via its N-terminal repeats with RuBisCO. Interacts with the major shell protein CsoS1. Post-translationally, unlike H.neapolitanus and predictions for P.marinus strain MIT 9313, this protein is not thought to have ribosomal frameshifting.

The protein localises to the carboxysome. In terms of biological role, required for alpha-carboxysome (Cb) assembly, mediates interaction between RuBisCO and the Cb shell. The protein is probably intrinsically disordered. The C-terminal repeats act as the encapsulation signal to target proteins to the Cb; they are necessary and sufficient to target both CsoS2 and foreign proteins to the Cb. The N-terminal repeats of this protein bind simultaneously to both subunits of RuBisCO. Probably also interacts with the major shell proteins (CsoS1); that interaction would increase the local concentration of CsoS2 so that it can condense RuBisCO and full carboxysomes can be formed. This is Carboxysome assembly protein CsoS2 from Hydrogenovibrio crunogenus (strain DSM 25203 / XCL-2) (Thiomicrospira crunogena).